A 623-amino-acid polypeptide reads, in one-letter code: AFI1-like protein C776.06c (623 aa).

One can recognise a uDENN domain in the interval 5-204 (DYLLTAIFDP…IDNIPKPGSE (200 aa)). One can recognise a cDENN domain in the interval 248–386 (ISNLINTFID…SDATTTMDTK (139 aa)). Residues 388–476 (LFNNTSPFTP…WSWDNDDEKV (89 aa)) enclose the dDENN domain.

The protein belongs to the AFI1/mesA family.

Its subcellular location is the cytoplasm. It is found in the cell cortex. The protein resides in the nucleus. Involved in polarity establishment. In Schizosaccharomyces pombe (strain 972 / ATCC 24843) (Fission yeast), this protein is AFI1-like protein C776.06c.